The chain runs to 714 residues: Structure-specific endonuclease subunit SLX4 2 (714 aa).

2 stretches are compositionally biased toward basic and acidic residues: residues 1 to 14 (MSPE…EDNL) and 24 to 34 (IHEETLAEESH). Disordered stretches follow at residues 1 to 114 (MSPE…EQQG) and 338 to 369 (SSGP…KTPQ). The segment covering 36–46 (QAIQRSISRLS) has biased composition (polar residues). A compositionally biased stretch (basic residues) spans 79–92 (KTKKRKLKVSKPRK).

This sequence belongs to the SLX4 family. Forms a heterodimer with SLX1. Post-translationally, phosphorylated in response to DNA damage.

Its subcellular location is the nucleus. In terms of biological role, regulatory subunit of the SLX1-SLX4 structure-specific endonuclease that resolves DNA secondary structures generated during DNA repair and recombination. Has endonuclease activity towards branched DNA substrates, introducing single-strand cuts in duplex DNA close to junctions with ss-DNA. In Candida tropicalis (strain ATCC MYA-3404 / T1) (Yeast), this protein is Structure-specific endonuclease subunit SLX4 2.